The chain runs to 164 residues: CASP-like protein 1C2 (164 aa).

Over 1–8 (MAVELKKV) the chain is Cytoplasmic. A helical membrane pass occupies residues 9–29 (FSTILRFLALAATVVAVIVMI). Residues 30-53 (RSHDSAIVLNLTFSAKYNNTPAFK) lie on the Extracellular side of the membrane. A glycan (N-linked (GlcNAc...) asparagine) is linked at Asn39. A helical transmembrane segment spans residues 54–74 (YFVIAEGIASVYTIIVIFLWS). Topologically, residues 75-80 (KGLLGR) are cytoplasmic. A helical transmembrane segment spans residues 81–101 (LIVILDMVTTVLLTSSISAAL). The Extracellular segment spans residues 102-129 (AIAQVGKKGNSHAGWLPVCGQVPKFCDQ). The helical transmembrane segment at 130-150 (AIIALVAGFVAAIVYFMLLLC) threads the bilayer. The Cytoplasmic segment spans residues 151-164 (SLHAVLTPIFAVKP).

This sequence belongs to the Casparian strip membrane proteins (CASP) family. In terms of assembly, homodimer and heterodimers.

It localises to the cell membrane. The protein is CASP-like protein 1C2 of Ricinus communis (Castor bean).